We begin with the raw amino-acid sequence, 152 residues long: Xanthine-guanine phosphoribosyltransferase (152 aa).

5-phospho-alpha-D-ribose 1-diphosphate-binding positions include 37–38 (RG), Arg69, and 88–96 (DDLVDSGDT). Arg69 contacts GMP. Asp89 lines the Mg(2+) pocket. Guanine-binding residues include Asp92 and Ile135. Residues Asp92 and Ile135 each coordinate xanthine. GMP contacts are provided by residues 92-96 (DSGDT) and 134-135 (WI).

This sequence belongs to the purine/pyrimidine phosphoribosyltransferase family. XGPT subfamily. As to quaternary structure, homotetramer. Mg(2+) serves as cofactor.

It is found in the cell inner membrane. It catalyses the reaction GMP + diphosphate = guanine + 5-phospho-alpha-D-ribose 1-diphosphate. It carries out the reaction XMP + diphosphate = xanthine + 5-phospho-alpha-D-ribose 1-diphosphate. The catalysed reaction is IMP + diphosphate = hypoxanthine + 5-phospho-alpha-D-ribose 1-diphosphate. The protein operates within purine metabolism; GMP biosynthesis via salvage pathway; GMP from guanine: step 1/1. It functions in the pathway purine metabolism; XMP biosynthesis via salvage pathway; XMP from xanthine: step 1/1. Purine salvage pathway enzyme that catalyzes the transfer of the ribosyl-5-phosphate group from 5-phospho-alpha-D-ribose 1-diphosphate (PRPP) to the N9 position of the 6-oxopurines guanine and xanthine to form the corresponding ribonucleotides GMP (guanosine 5'-monophosphate) and XMP (xanthosine 5'-monophosphate), with the release of PPi. To a lesser extent, also acts on hypoxanthine. This chain is Xanthine-guanine phosphoribosyltransferase, found in Aliivibrio salmonicida (strain LFI1238) (Vibrio salmonicida (strain LFI1238)).